We begin with the raw amino-acid sequence, 308 residues long: Oxygen-dependent coproporphyrinogen-III oxidase (308 aa).

Residue S100 participates in substrate binding. Residues H104 and H114 each coordinate a divalent metal cation. The active-site Proton donor is the H114. A substrate-binding site is contributed by 116-118 (NFR). A divalent metal cation is bound by residues H153 and H183. The segment at 248–283 (YVEFNLVFDRGTIFGLQSGGRTESILSSMPPMATWK) is important for dimerization. 266-268 (GGR) contacts substrate.

Belongs to the aerobic coproporphyrinogen-III oxidase family. Homodimer. Requires a divalent metal cation as cofactor.

The protein localises to the cytoplasm. It carries out the reaction coproporphyrinogen III + O2 + 2 H(+) = protoporphyrinogen IX + 2 CO2 + 2 H2O. It functions in the pathway porphyrin-containing compound metabolism; protoporphyrin-IX biosynthesis; protoporphyrinogen-IX from coproporphyrinogen-III (O2 route): step 1/1. Involved in the heme biosynthesis. Catalyzes the aerobic oxidative decarboxylation of propionate groups of rings A and B of coproporphyrinogen-III to yield the vinyl groups in protoporphyrinogen-IX. This is Oxygen-dependent coproporphyrinogen-III oxidase from Francisella tularensis subsp. holarctica (strain OSU18).